The sequence spans 65 residues: Large ribosomal subunit protein bL35 (65 aa).

Residues 1-26 (MPKMKTNRASAKRFKKTASGGFKAGQ) form a disordered region.

The protein belongs to the bacterial ribosomal protein bL35 family.

In Oenococcus oeni (strain ATCC BAA-331 / PSU-1), this protein is Large ribosomal subunit protein bL35.